A 69-amino-acid polypeptide reads, in one-letter code: Small ribosomal subunit protein bS21 (69 aa).

Residues 50–69 (KAFKRKQAKKVRKLKQKTNR) form a disordered region.

This sequence belongs to the bacterial ribosomal protein bS21 family.

This chain is Small ribosomal subunit protein bS21, found in Borrelia garinii subsp. bavariensis (strain ATCC BAA-2496 / DSM 23469 / PBi) (Borreliella bavariensis).